The following is a 207-amino-acid chain: dITP/XTP pyrophosphatase (207 aa).

16-21 (SNNKGK) serves as a coordination point for substrate. Catalysis depends on Asp79, which acts as the Proton acceptor. Asp79 is a Mg(2+) binding site. Substrate-binding positions include Ser80, 166 to 169 (FGYD), Lys189, and 194 to 195 (HR).

The protein belongs to the HAM1 NTPase family. Homodimer. It depends on Mg(2+) as a cofactor.

It carries out the reaction XTP + H2O = XMP + diphosphate + H(+). It catalyses the reaction dITP + H2O = dIMP + diphosphate + H(+). The catalysed reaction is ITP + H2O = IMP + diphosphate + H(+). In terms of biological role, pyrophosphatase that catalyzes the hydrolysis of nucleoside triphosphates to their monophosphate derivatives, with a high preference for the non-canonical purine nucleotides XTP (xanthosine triphosphate), dITP (deoxyinosine triphosphate) and ITP. Seems to function as a house-cleaning enzyme that removes non-canonical purine nucleotides from the nucleotide pool, thus preventing their incorporation into DNA/RNA and avoiding chromosomal lesions. The protein is dITP/XTP pyrophosphatase of Acinetobacter baumannii (strain ATCC 17978 / DSM 105126 / CIP 53.77 / LMG 1025 / NCDC KC755 / 5377).